The primary structure comprises 238 residues: Dolichyldiphosphatase 1 (238 aa).

The next 4 helical transmembrane spans lie at 33 to 53 (LAYL…LIIF), 100 to 120 (PSSH…FLYL), 130 to 150 (FLDL…AFLV), and 162 to 182 (WSQV…WFIF).

This sequence belongs to the dolichyldiphosphatase family.

The protein localises to the endoplasmic reticulum membrane. It catalyses the reaction a di-trans,poly-cis-dolichyl diphosphate + H2O = a di-trans,poly-cis-dolichyl phosphate + phosphate + H(+). It participates in protein modification; protein glycosylation. Its function is as follows. Required for efficient N-glycosylation. Necessary for maintaining optimal levels of dolichol-linked oligosaccharides. Hydrolyzes dolichyl pyrophosphate at a very high rate and dolichyl monophosphate at a much lower rate. Does not act on phosphatidate. This Callithrix jacchus (White-tufted-ear marmoset) protein is Dolichyldiphosphatase 1 (DOLPP1).